Here is a 103-residue protein sequence, read N- to C-terminus: Small ribosomal subunit protein uS10 (103 aa).

The protein belongs to the universal ribosomal protein uS10 family. In terms of assembly, part of the 30S ribosomal subunit.

Functionally, involved in the binding of tRNA to the ribosomes. This chain is Small ribosomal subunit protein uS10, found in Campylobacter lari (strain RM2100 / D67 / ATCC BAA-1060).